A 162-amino-acid chain; its full sequence is Shikimate kinase (162 aa).

11–16 (GSGKSS) serves as a coordination point for ATP. Residue Ser-15 coordinates Mg(2+). Residues Asp-33, Arg-57, and Gly-80 each contribute to the substrate site. Arg-116 serves as a coordination point for ATP. A substrate-binding site is contributed by Arg-132.

It belongs to the shikimate kinase family. Monomer. The cofactor is Mg(2+).

The protein resides in the cytoplasm. The catalysed reaction is shikimate + ATP = 3-phosphoshikimate + ADP + H(+). The protein operates within metabolic intermediate biosynthesis; chorismate biosynthesis; chorismate from D-erythrose 4-phosphate and phosphoenolpyruvate: step 5/7. Functionally, catalyzes the specific phosphorylation of the 3-hydroxyl group of shikimic acid using ATP as a cosubstrate. The chain is Shikimate kinase from Helicobacter pylori (strain G27).